The chain runs to 387 residues: Alpha-sarcoglycan (387 aa).

A signal peptide spans 1 to 23 (MAETLFWTPLLVVLLAGLGDTEA). At 24–290 (QQTTLHPLVG…APDRDFLVDA (267 aa)) the chain is on the extracellular side. Residues Asn-174 and Asn-246 are each glycosylated (N-linked (GlcNAc...) asparagine). The chain crosses the membrane as a helical span at residues 291–311 (LVTLLVPLLVALLLTLLLAYV). The Cytoplasmic portion of the chain corresponds to 312–387 (MCCRREGRLK…AQVPLILDQH (76 aa)). At Ser-377 the chain carries Phosphoserine.

This sequence belongs to the sarcoglycan alpha/epsilon family. Interacts with the syntrophin SNTA1. Cross-link to form 2 major subcomplexes: one consisting of SGCB, SGCD and SGCG and the other consisting of SGCB and SGCD. The association between SGCB and SGCG is particularly strong while SGCA is loosely associated with the other sarcoglycans. In terms of tissue distribution, most strongly expressed in skeletal muscle. Also expressed in cardiac muscle and, at much lower levels, in lung. In the fetus, most abundant in cardiac muscle and, at lower levels, in lung. Also detected in liver and kidney. Not expressed in brain.

The protein resides in the cell membrane. Its subcellular location is the sarcolemma. The protein localises to the cytoplasm. It is found in the cytoskeleton. In terms of biological role, component of the sarcoglycan complex, a subcomplex of the dystrophin-glycoprotein complex which forms a link between the F-actin cytoskeleton and the extracellular matrix. This chain is Alpha-sarcoglycan (SGCA), found in Homo sapiens (Human).